Consider the following 320-residue polypeptide: Ribose-phosphate pyrophosphokinase 3 (320 aa).

Mg(2+) contacts are provided by Asp131, His133, Asp142, and Asp146.

It belongs to the ribose-phosphate pyrophosphokinase family.

It is found in the cytoplasm. The enzyme catalyses D-ribose 5-phosphate + ATP = 5-phospho-alpha-D-ribose 1-diphosphate + AMP + H(+). It functions in the pathway metabolic intermediate biosynthesis; 5-phospho-alpha-D-ribose 1-diphosphate biosynthesis; 5-phospho-alpha-D-ribose 1-diphosphate from D-ribose 5-phosphate (route I): step 1/1. Functionally, 5-phosphoribose 1-diphosphate synthase involved in nucleotide, histidine, and tryptophan biosynthesis. Active in heteromultimeric complexes with other 5-phosphoribose 1-diphosphate synthases (PRS2, PRS3, PRS4 and PRS5). This chain is Ribose-phosphate pyrophosphokinase 3 (PRS3), found in Saccharomyces cerevisiae (strain ATCC 204508 / S288c) (Baker's yeast).